A 637-amino-acid polypeptide reads, in one-letter code: 1-deoxy-D-xylulose-5-phosphate synthase (637 aa).

Residues His-73 and 113-115 (SHA) each bind thiamine diphosphate. Asp-145 contributes to the Mg(2+) binding site. Residues 146 to 147 (GA), Asn-175, Tyr-286, and Glu-367 each bind thiamine diphosphate. Asn-175 is a Mg(2+) binding site.

Belongs to the transketolase family. DXPS subfamily. Homodimer. Requires Mg(2+) as cofactor. The cofactor is thiamine diphosphate.

The catalysed reaction is D-glyceraldehyde 3-phosphate + pyruvate + H(+) = 1-deoxy-D-xylulose 5-phosphate + CO2. Its pathway is metabolic intermediate biosynthesis; 1-deoxy-D-xylulose 5-phosphate biosynthesis; 1-deoxy-D-xylulose 5-phosphate from D-glyceraldehyde 3-phosphate and pyruvate: step 1/1. Catalyzes the acyloin condensation reaction between C atoms 2 and 3 of pyruvate and glyceraldehyde 3-phosphate to yield 1-deoxy-D-xylulose-5-phosphate (DXP). In Thermobifida fusca (strain YX), this protein is 1-deoxy-D-xylulose-5-phosphate synthase.